We begin with the raw amino-acid sequence, 250 residues long: tRNA:m(4)X modification enzyme TRM13 (250 aa).

Basic residues predominate over residues 1–10 (MGRAPAKRKP). The segment at 1–20 (MGRAPAKRKPSSPPPPPPPG) is disordered. The segment covering 11–20 (SSPPPPPPPG) has biased composition (pro residues). Residues 62–89 (LVPCPVDPSHTVLEENLEAHVGKCPLKK) form a CHHC U11-48K-type zinc finger. Zn(2+)-binding residues include Cys-65, His-71, His-81, and Cys-85.

It belongs to the methyltransferase TRM13 family.

The protein resides in the nucleus. The protein localises to the cytoplasm. The catalysed reaction is cytidine(4) in tRNA(Pro) + S-adenosyl-L-methionine = 2'-O-methylcytidine(4) in tRNA(Pro) + S-adenosyl-L-homocysteine + H(+). It carries out the reaction cytidine(4) in tRNA(Gly)(GCC) + S-adenosyl-L-methionine = 2'-O-methylcytidine(4) in tRNA(Gly)(GCC) + S-adenosyl-L-homocysteine + H(+). The enzyme catalyses adenosine(4) in tRNA(His) + S-adenosyl-L-methionine = 2'-O-methyladenosine(4) in tRNA(His) + S-adenosyl-L-homocysteine + H(+). Functionally, tRNA methylase that catalyzes 2'-O-methyladenosine (Am) nucleoside formation on tRNA(Gly)(GCC) in vitro. May 2'-O-methylate cytidine(4) in tRNA(Pro) and tRNA(Gly)(GCC), and adenosine(4) in tRNA(His). Involved in salt stress tolerance. The chain is tRNA:m(4)X modification enzyme TRM13 from Oryza sativa subsp. japonica (Rice).